Reading from the N-terminus, the 469-residue chain is Hydrogen cyanide synthase subunit HcnB (469 aa).

As to quaternary structure, heterotrimer of HcnA, HcnB and HcnC.

Its subcellular location is the cell membrane. It catalyses the reaction glycine + 2 A = hydrogen cyanide + 2 AH2 + CO2. Its function is as follows. A three-component membrane-bound flavoenzyme that catalyzes the formation of hydrogen cyanide, a secondary metabolite, by transfer of electrons to a cyanide-resistant branch of the aerobic respiratory chain. Contributes to suppression of black root rot of tobacco. This is Hydrogen cyanide synthase subunit HcnB from Pseudomonas protegens (strain DSM 19095 / LMG 27888 / CFBP 6595 / CHA0).